The chain runs to 370 residues: Sphingosine 1-phosphate receptor 2 (370 aa).

Topologically, residues 1–57 (MTTCRLFAGFCQAVTMSKYSQYFNKTLIQVHYLTAKEMTAEELRDRIESKQSLSSLN) are extracellular. Asn-24 carries N-linked (GlcNAc...) asparagine glycosylation. Residues 58 to 78 (ILFVVICSIIILENLLVLIAV) form a helical membrane-spanning segment. Over 79–87 (FRNKKFHSA) the chain is Cytoplasmic. The chain crosses the membrane as a helical span at residues 88 to 108 (MFFFIGNLAFSDLLAGSAYIA). The Extracellular segment spans residues 109–128 (NIFLSGPRTFHLTPVQWFIR). The chain crosses the membrane as a helical span at residues 129 to 149 (EGTAFIALSASVFSLLAIAIE). Over 150-167 (RYIAITKVKVYGSNKTCR) the chain is Cytoplasmic. The helical transmembrane segment at 168–193 (MFLLIGACWVMSILLGGLPIIGWNCI) threads the bilayer. Over 194 to 219 (NNLDDCSAVLPLNTRYYIRFVVTIFS) the chain is Extracellular. The helical transmembrane segment at 220 to 230 (IILLSIVILYV) threads the bilayer. Residues 231–254 (RIYLIVRTSHQEATNSPAYALLKT) lie on the Cytoplasmic side of the membrane. Residues 255-275 (VTIVLGVFIICWLPAFTILLL) form a helical membrane-spanning segment. Residues 276–289 (DTSCKMKQCPILNN) are Extracellular-facing. The helical transmembrane segment at 290 to 310 (AGIFFSFATLNSALNPLIYTL) threads the bilayer. Residues 311-370 (RSKDMRKEFLRVLCCWGLLNCGRPPHRCMVPLKSSSSMEHCTNKHEHQSIPIMQDCTTCV) lie on the Cytoplasmic side of the membrane. Cys-325 carries the S-palmitoyl cysteine lipid modification.

It belongs to the G-protein coupled receptor 1 family.

The protein localises to the cell membrane. Receptor for the lysosphingolipid sphingosine 1-phosphate (S1P). S1P receptor is critical for cell migration and epithelial integrity during vertebrate embryogenesis. Receptor for the chemokine-like protein FAM19A5. Mediates the inhibitory effect of FAM19A5 on vascular smooth muscle cell proliferation and migration. This Danio rerio (Zebrafish) protein is Sphingosine 1-phosphate receptor 2 (s1pr2).